The chain runs to 532 residues: Cytochrome P450 monooxygenase pgmC (532 aa).

The chain crosses the membrane as a helical span at residues 15 to 32 (ISTLAVLIGFIALLTAWL). Residue cysteine 438 coordinates heme.

Belongs to the cytochrome P450 family. The cofactor is heme.

It localises to the membrane. It functions in the pathway pigment biosynthesis. The protein operates within secondary metabolite biosynthesis. Its function is as follows. Cytochrome P450 monooxygenase; part of the gene cluster that mediates the biosynthesis of pleosporalin A, ascomycone A, as well as a third cryptic naphthoquinone derived pigment, all responsible for the coloration of conidia. Involved in the oxidation of fusarubinaldehyde at C-9. PgmC has low substrate-specificity and is also able to use the pgmA product 3-acetonyl-1,6,8-trihydroxy-2-naphthaldehyde as a substrate. The pathway begins with the biosynthesis of the cyclized heptaketide 3-acetonyl-1,6,8-trihydroxy-2-naphthaldehyde by the NR-PKS pgmA. The C-6 hydroxyl group is further methylated by the O-methyltransferase pgmB to yield fusarubinaldehyde which is in turn oxidized by the cytochrome P450 monooxygenase pgmC at C-9. The C-1 hydroxyl group is then methylated spontaneously. Although pgmE, pgmD and pgmH are essential for the production of pleosporalin A, it is not the case for the 2 other final products and it remains difficult to assign a specific function to each enzyme. PgmF and pgmG seem not to be involved in pigment biosynthesis although they were regulated by the cluster-specific transcription factor pgmR. The protein is Cytochrome P450 monooxygenase pgmC of Aspergillus terreus (strain NIH 2624 / FGSC A1156).